Reading from the N-terminus, the 797-residue chain is Striatin-3 (797 aa).

Methionine 1 is modified (N-acetylmethionine). Gly residues-rich tracts occupy residues 1 to 12 (MDELAGGGGGGP) and 33 to 43 (GGNGAAGGGGP). Residues 1 to 60 (MDELAGGGGGGPAMASPPRQQQGPGGNMSLSPGGNGAAGGGGPPATEGAGPAAGPELSRP) form a disordered region. The span at 44-55 (PATEGAGPAAGP) shows a compositional bias: low complexity. A caveolin-binding region spans residues 71-79 (YIQHEWARF). Positions 77–136 (ARFEMERAHWEVERAELQARIAFLQGERKGQENLKKDLVRRIKMLEYALKQERAKYHKLK) form a coiled coil. Threonine 150 is subject to Phosphothreonine. The calmodulin-binding stretch occupies residues 166-183 (QNSQLTWKQGRQLLRQYL). Serine 202, serine 214, serine 229, serine 257, and serine 335 each carry phosphoserine. The interval 313 to 336 (DGEGAGEARSSGDGTEWDKDDLSP) is disordered. WD repeat units follow at residues 478–517 (SHFD…PAKK), 531–570 (AHIG…VDPY), 584–623 (AHTD…PCIC), 679–718 (QSSN…MIHS), 721–760 (AHLD…CVQE), and 767–796 (KLDE…AKVF).

The protein belongs to the WD repeat striatin family. As to quaternary structure, tetramerizes. Part of the core of STRIPAK complexes composed of PP2A catalytic and scaffolding subunits, the striatins (PP2A regulatory subunits), the striatin-associated proteins MOB4, STRIP1 and STRIP2, PDCD10 and members of the STE20 kinases, such as STK24 and STK26. The STRIPAK complex can be extended by adapter proteins such as SLMAP:SIKE1 or CTTNBP2NL. Interacts with CDC42BPB.

The protein resides in the cytoplasm. It localises to the membrane. Calmodulin-binding scaffolding protein which is the center of the striatin-interacting phosphatase and kinase (STRIPAK) complexes. STRIPAK complexes have critical roles in protein (de)phosphorylation and are regulators of multiple signaling pathways including Hippo, MAPK, nuclear receptor and cytoskeleton remodeling. Different types of STRIPAK complexes are involved in a variety of biological processes such as cell growth, differentiation, apoptosis, metabolism and immune regulation. This chain is Striatin-3 (STRN3), found in Bos taurus (Bovine).